Consider the following 135-residue polypeptide: Fatty acid-binding protein 5 (135 aa).

Ala2 carries the N-acetylalanine modification. The residue at position 17 (Lys17) is an N6-acetyllysine. The short motif at 24–34 is the Nuclear localization signal element; it reads KELGVGIALRK. N-eicosanoyl ethanolamine-binding residues include Cys43 and Arg109. A disulfide bridge links Cys120 with Cys127. A (9Z,12Z)-octadecadienoate-binding site is contributed by 129 to 131; it reads RIY. Residue Tyr131 participates in N-eicosanoyl ethanolamine binding. Tyr131 contributes to the hexadecanoate binding site. A Phosphotyrosine modification is found at Tyr131.

Belongs to the calycin superfamily. Fatty-acid binding protein (FABP) family. In terms of assembly, monomer. Homodimer. As to expression, keratinocytes; highly expressed in psoriatic skin. Expressed in brain gray matter.

The protein localises to the cytoplasm. The protein resides in the nucleus. Its subcellular location is the synapse. It is found in the postsynaptic density. It localises to the secreted. The enzyme catalyses hexadecanoate(out) = hexadecanoate(in). The catalysed reaction is (9Z,12Z)-octadecadienoate(out) = (9Z,12Z)-octadecadienoate(in). It catalyses the reaction (9Z)-octadecenoate(out) = (9Z)-octadecenoate(in). Functionally, intracellular carrier for long-chain fatty acids and related active lipids, such as endocannabinoids, that regulate the metabolism and actions of the ligands they bind. In addition to the cytosolic transport, selectively delivers specific fatty acids from the cytosol to the nucleus, wherein they activate nuclear receptors. Delivers retinoic acid to the nuclear receptor peroxisome proliferator-activated receptor delta; which promotes proliferation and survival. May also serve as a synaptic carrier of endocannabinoid at central synapses and thus controls retrograde endocannabinoid signaling. Modulates inflammation by regulating PTGES induction via NF-kappa-B activation, and prostaglandin E2 (PGE2) biosynthesis during inflammation. May be involved in keratinocyte differentiation. The chain is Fatty acid-binding protein 5 from Homo sapiens (Human).